Here is a 341-residue protein sequence, read N- to C-terminus: Phenylalanine--tRNA ligase alpha subunit (341 aa).

A Mg(2+)-binding site is contributed by E256.

The protein belongs to the class-II aminoacyl-tRNA synthetase family. Phe-tRNA synthetase alpha subunit type 1 subfamily. In terms of assembly, tetramer of two alpha and two beta subunits. The cofactor is Mg(2+).

Its subcellular location is the cytoplasm. The enzyme catalyses tRNA(Phe) + L-phenylalanine + ATP = L-phenylalanyl-tRNA(Phe) + AMP + diphosphate + H(+). This Leptospira borgpetersenii serovar Hardjo-bovis (strain JB197) protein is Phenylalanine--tRNA ligase alpha subunit.